The sequence spans 259 residues: Submandibular glandular kallikrein-9 (259 aa).

The first 18 residues, 1 to 18 (MWFLILFLALSLGQIDAA), serve as a signal peptide directing secretion. Residues 19-24 (PPGQSR) constitute a propeptide, activation peptide. Residues 25–256 (VVGGYNCETN…FTSWIKKVMK (232 aa)) enclose the Peptidase S1 domain. 5 cysteine pairs are disulfide-bonded: C31–C171, C48–C64, C150–C217, C182–C196, and C207–C232. H63 (charge relay system) is an active-site residue. N106 carries N-linked (GlcNAc...) asparagine glycosylation. The Charge relay system role is filled by D118. Residue S211 is the Charge relay system of the active site.

This sequence belongs to the peptidase S1 family. Kallikrein subfamily. In terms of assembly, heterodimer of a light chain and heavy chain linked by a disulfide bond.

The catalysed reaction is Preferential cleavage of Arg-|-Xaa bonds in small molecule substrates. Highly selective action to release kallidin (lysyl-bradykinin) from kininogen involves hydrolysis of Met-|-Xaa or Leu-|-Xaa.. Its function is as follows. Glandular kallikreins cleave Met-Lys and Arg-Ser bonds in kininogen to release Lys-bradykinin. This enzyme has a vasoconstrictor activity. KLK-9 has both a chymotrypsin-like and a trypsin-like properties. This Rattus norvegicus (Rat) protein is Submandibular glandular kallikrein-9 (Klk9).